A 342-amino-acid polypeptide reads, in one-letter code: MCAINKAYLLTKFYISANSCAFFVKSQRKWTSPDLSEDVAQKFLETASEMKFDASKQVLVHGSYLINMANADEQKREQAFNCFVDDLKRCERLGVGLYNFHPGSTASCTKEEGINNLAECINRAHEETKSVIIVTENMAGQGNCLGGTFDDFAALKSKIKNLDRWRVCLDTCHTFAAGYDIRTEESYKKVIDEFDEKVGAKYVSGWHLNDSKAPLGSNRDLHENIGLGFLGLEPFRLIMNDSRWDGIPLVLETPAKSPEQWKKEVELLRFMVGKSSDDVELMKESARLSNLGAASRKEHLNKFEKKEAKKDRKKKSKDGDQTTLLLRKKQKLGNAEVKSLDE.

Zn(2+)-binding residues include His61, Glu136, Asp170, His173, His207, Asp220, His222, and Glu252. A compositionally biased stretch (basic and acidic residues) spans 299 to 310 (HLNKFEKKEAKK). The interval 299 to 342 (HLNKFEKKEAKKDRKKKSKDGDQTTLLLRKKQKLGNAEVKSLDE) is disordered.

It belongs to the AP endonuclease 2 family. Zn(2+) is required as a cofactor.

It is found in the nucleus. DNA repair enzyme that cleaves apurinic/apyrimidinic (AP) sites and removes 3'-blocking groups present at single strand breaks of damaged DNA. Provides back-up AP endonuclease (APE) activity to apn2 together with uve1. This chain is Apurinic-apyrimidinic endonuclease 1 (apn1), found in Schizosaccharomyces pombe (strain 972 / ATCC 24843) (Fission yeast).